The chain runs to 161 residues: SsrA-binding protein (161 aa).

It belongs to the SmpB family.

The protein resides in the cytoplasm. Required for rescue of stalled ribosomes mediated by trans-translation. Binds to transfer-messenger RNA (tmRNA), required for stable association of tmRNA with ribosomes. tmRNA and SmpB together mimic tRNA shape, replacing the anticodon stem-loop with SmpB. tmRNA is encoded by the ssrA gene; the 2 termini fold to resemble tRNA(Ala) and it encodes a 'tag peptide', a short internal open reading frame. During trans-translation Ala-aminoacylated tmRNA acts like a tRNA, entering the A-site of stalled ribosomes, displacing the stalled mRNA. The ribosome then switches to translate the ORF on the tmRNA; the nascent peptide is terminated with the 'tag peptide' encoded by the tmRNA and targeted for degradation. The ribosome is freed to recommence translation, which seems to be the essential function of trans-translation. This Vibrio campbellii (strain ATCC BAA-1116) protein is SsrA-binding protein.